Consider the following 58-residue polypeptide: Large ribosomal subunit protein eL37 (58 aa).

A compositionally biased stretch (polar residues) spans 1-17; sequence MTGAGTPSQGKKNTTTH. The interval 1–26 is disordered; it reads MTGAGTPSQGKKNTTTHTKCRRCGEK. Positions 20, 23, 35, and 38 each coordinate Zn(2+). The C4-type zinc finger occupies 20–38; the sequence is CRRCGEKSYHTKKKVCSSC.

It belongs to the eukaryotic ribosomal protein eL37 family. Zn(2+) is required as a cofactor.

In terms of biological role, binds to the 23S rRNA. The polypeptide is Large ribosomal subunit protein eL37 (Halobacterium salinarum (strain ATCC 29341 / DSM 671 / R1)).